Reading from the N-terminus, the 1204-residue chain is MRKPRRKSRQNAEGRRSPSPYSLKCSPTRETLTYAQAQRIVEVDIDGRLHRISIYDPLKIITEDELTAQDITECNSNKENSEQPQFPAKSKKPSSKGKRKESCSKHASGTSFHLPQPSFRVVDTGSQPEAPPLPAAYYRYIEKPPEDLDAEVEYDMDEEDIAWLDMVNEKRRADGHSSVSADTFELLVDRLEKESYLESRSSGAQQSLIDEDAFCCVCLDDECHNSNVILFCDICNLAVHQECYGVPYIPEGQWLCRCCLQSPSRPVDCVLCPNKGGAFKQTSDGHWAHVVCAIWIPEVCFANTVFLEPIEGIDNIPPARWKLTCYICKQKGLGAAIQCHKVNCYTAFHVTCAQRAGLFMKIEPMRETSLNGTTFTVRKTAYCEAHSPSVAVARRKGDSPRSLSEVGDEDGPKEGGGEEEQEEAEEEGQEGQGGVGSPLKGVSKKGKMSLKQKIKKEPEEAGREAPSITLPMVTVPQIPSYRLNKICSGLSFQRKTQFMQRLHNYWLLKRQARNGVPLIRRLHSHLQSQRNAEQREQDEKTSAVKEELKYWQKLRHDLERARLLIELIRKREKLKREQVKVQQAAMELELMPFTVLLRTTLDLLQEKDSAHIFAEPVSLSEVPDYLEFISKPMDFSTMRRKLESHLYHTLEEFEEDFNLIVTNCMKYNAKDTIFHRAAVRLRDLGGAILRHARRQAENIGYDPERGTHLPESPRLEDFYRFSWEDVDNILIPENRAHLSPEAQLKELLEKLDLVSTMRSSGARTRRVRMLRREINALRQKLAQPPPPQLLSLNKTVPNGELPAGSRGDTAVLEQAQQEEPEEEGDRDDSKLPAPPTLEPTGPAPSLSEQESPPDPPTLKPISDSKPSSRFLKSRKVEDEELLEKSALQLGSEPLQCLLSDNGIDRLSLTNPDSHPDTPLGTVGRRTSVLFKKAKNGVKLQRGPDGTLENGEDHGPEDDPASPASTEDEHYSRKRPRSRSCSDSEGERSPQQEEETGVTNGFGKHTESGSDSECSLGLSGGLAFEAGSGLTPPKRSRGKPALSRVPFLEGVNGDSDHSGSGRSLLMPFEDHGDLEPLELVWAKCRGYPSYPALIIDPKMPREGLLHNGVPIPVPPLDVLKLGEQKQAEAGERLFLVLFFDNKRTWQWLPRDKVLPLGVEDTVDKLKMLEGRKTSIRKSVQVAYDRAMIHLSRVRGSHAFVTSSYL.

2 disordered regions span residues 1 to 27 and 76 to 127; these read MRKP…KCSP and SNKE…TGSQ. Residues 89-99 show a composition bias toward basic residues; the sequence is KSKKPSSKGKR. Residues 212–262 form a PHD-type 1 zinc finger; the sequence is DAFCCVCLDDECHNSNVILFCDICNLAVHQECYGVPYIPEGQWLCRCCLQS. A C2HC pre-PHD-type zinc finger spans residues 266–299; it reads PVDCVLCPNKGGAFKQTSDGHWAHVVCAIWIPEV. A PHD-type 2 zinc finger spans residues 323–387; the sequence is LTCYICKQKG…RKTAYCEAHS (65 aa). Residues 393 to 464 form a disordered region; sequence ARRKGDSPRS…KKEPEEAGRE (72 aa). Phosphoserine occurs at positions 399 and 402. Residues 417 to 429 are compositionally biased toward acidic residues; it reads GEEEQEEAEEEGQ. The span at 442 to 454 shows a compositional bias: basic residues; it reads VSKKGKMSLKQKI. N6-acetyllysine is present on residues K445, K447, and K670. Residues 588–692 form the Bromo domain; the sequence is LELMPFTVLL…DLGGAILRHA (105 aa). S712 and S739 each carry phosphoserine. The interval 778–879 is disordered; that stretch reads RQKLAQPPPP…FLKSRKVEDE (102 aa). Residues 816–826 show a composition bias toward acidic residues; the sequence is QQEEPEEEGDR. 3 positions are modified to phosphoserine: S899, S961, and S964. A disordered region spans residues 903 to 1015; it reads IDRLSLTNPD…ESGSDSECSL (113 aa). The segment covering 979–990 has biased composition (basic and acidic residues); the sequence is SCSDSEGERSPQ. The region spanning 1075-1158 is the PWWP domain; that stretch reads PLELVWAKCR…RDKVLPLGVE (84 aa).

Component of some HBO1 complexes composed of KAT7/HBO1, MEAF6, ING4 or ING5, and BRPF3. Component of the MOZ/MORF complex composed at least of ING5, KAT6A, KAT6B, MEAF6 and one of BRPF1, BRD1/BRPF2 and BRPF3. Interacts with KAT7/HBO1; the interaction is direct. In terms of tissue distribution, highly expressed in the adult testis and brain.

The protein localises to the nucleus. Scaffold subunit of various histone acetyltransferase (HAT) complexes, such as the MOZ/MORF and HBO1 complexes, which have a histone H3 acetyltransferase activity. Plays a role in DNA replication initiation by directing KAT7/HBO1 specificity towards histone H3 'Lys-14' acetylation (H3K14ac), thereby facilitating the activation of replication origins. Component of the MOZ/MORF complex which has a histone H3 acetyltransferase activity. This chain is Bromodomain and PHD finger-containing protein 3, found in Mus musculus (Mouse).